The following is a 157-amino-acid chain: Snaclec A16 (157 aa).

A signal peptide spans 1 to 23; sequence MGRLISVSFGLLVVFLSLSGTGA. Disulfide bonds link C27–C38, C55–C149, and C124–C141. A C-type lectin domain is found at 34–150; sequence YEGHCYKVFN…CELAYHFICM (117 aa).

It belongs to the snaclec family. In terms of assembly, heterodimer; disulfide-linked. In terms of tissue distribution, expressed by the venom gland.

The protein resides in the secreted. In terms of biological role, interferes with one step of hemostasis (modulation of platelet aggregation, or coagulation cascade, for example). The chain is Snaclec A16 from Macrovipera lebetinus (Levantine viper).